The primary structure comprises 335 residues: UPF0353 protein Mjls_2492 (335 aa).

Helical transmembrane passes span 18-38 (WFFL…IVAL) and 67-87 (LPAI…AGPT). The VWFA domain maps to 98–294 (VVMLVIDVSQ…EQLREVYANL (197 aa)). Residues 309 to 329 (VGWLRLGALVLALSALAALLL) traverse the membrane as a helical segment.

It belongs to the UPF0353 family.

The protein localises to the cell membrane. The polypeptide is UPF0353 protein Mjls_2492 (Mycobacterium sp. (strain JLS)).